The chain runs to 92 residues: RNA-binding protein Hfq (92 aa).

Residues 9-68 (DPFLNALRRERVPVSVYLVNGIKLQGTIESFDQFVVLLRNTVSQMVYKHAISTVVPARNV) enclose the Sm domain. The disordered stretch occupies residues 72 to 92 (PGGGYVQSNENNQAEDDDVEQ).

Belongs to the Hfq family. Homohexamer.

Its function is as follows. RNA chaperone that binds small regulatory RNA (sRNAs) and mRNAs to facilitate mRNA translational regulation in response to envelope stress, environmental stress and changes in metabolite concentrations. Also binds with high specificity to tRNAs. The polypeptide is RNA-binding protein Hfq (Xanthomonas campestris pv. campestris (strain 8004)).